The primary structure comprises 337 residues: MRVLGIETSCDETGVAVYDDEQGLLSHTLYSQVKLHADYGGVVPELASRDHVRKIVPLVKQALADANCTLDDIDGVAYTKGPGLVGALLVGACMGRALAYSWGKPAVGVHHMEGHLLAPMLEDDVPEFPFLALLVSGGHSMLVGVEGIGQYEVLGESVDDAAGEAFDKTAKLMGLDYPGGPRLSKLAAKGETGHYRFPRPMTDRPGLDFSFSGLKTFAANTIAKEPDDEQTRANIARAFEEAVVDTLSIKCRRALKQTGYKRLVVAGGVSANTRLRTTLAETMQAQGGQVYYPRGEFCTDNGAMIAYAGLQRLKAGHIEDLGVKGEPRWPLDTLPAV.

The Fe cation site is built by H111 and H115. Residues 134-138, D167, G180, and N272 each bind substrate; that span reads LVSGG. D300 contacts Fe cation.

Belongs to the KAE1 / TsaD family. Fe(2+) serves as cofactor.

Its subcellular location is the cytoplasm. It carries out the reaction L-threonylcarbamoyladenylate + adenosine(37) in tRNA = N(6)-L-threonylcarbamoyladenosine(37) in tRNA + AMP + H(+). Functionally, required for the formation of a threonylcarbamoyl group on adenosine at position 37 (t(6)A37) in tRNAs that read codons beginning with adenine. Is involved in the transfer of the threonylcarbamoyl moiety of threonylcarbamoyl-AMP (TC-AMP) to the N6 group of A37, together with TsaE and TsaB. TsaD likely plays a direct catalytic role in this reaction. The chain is tRNA N6-adenosine threonylcarbamoyltransferase from Shewanella sediminis (strain HAW-EB3).